An 831-amino-acid chain; its full sequence is Translation initiation factor IF-2 (831 aa).

Residues 1–11 (MADEIKKENAP) are compositionally biased toward basic and acidic residues. The interval 1 to 236 (MADEIKKENA…GKHAKKASAL (236 aa)) is disordered. The span at 22 to 31 (TTVSGTSTTG) shows a compositional bias: low complexity. Basic and acidic residues-rich tracts occupy residues 49–150 (DLER…RYAD) and 157–166 (DNGKLDDYSD). Basic residues predominate over residues 190–200 (RSKNKVVKAKK). The segment covering 201–225 (GGRDDENGNKNERQSDRRNQKDVKG) has biased composition (basic and acidic residues). One can recognise a tr-type G domain in the interval 330-500 (HRAPVVTIMG…LLQSEVLELT (171 aa)). The segment at 339 to 346 (GHVDHGKT) is G1. 339-346 (GHVDHGKT) serves as a coordination point for GTP. Residues 364–368 (GITQH) form a G2 region. The tract at residues 386–389 (DTPG) is G3. GTP is bound by residues 386 to 390 (DTPGH) and 440 to 443 (NKID). The tract at residues 440–443 (NKID) is G4. The segment at 476–478 (SAK) is G5.

It belongs to the TRAFAC class translation factor GTPase superfamily. Classic translation factor GTPase family. IF-2 subfamily.

Its subcellular location is the cytoplasm. Functionally, one of the essential components for the initiation of protein synthesis. Protects formylmethionyl-tRNA from spontaneous hydrolysis and promotes its binding to the 30S ribosomal subunits. Also involved in the hydrolysis of GTP during the formation of the 70S ribosomal complex. This is Translation initiation factor IF-2 from Histophilus somni (strain 2336) (Haemophilus somnus).